Reading from the N-terminus, the 178-residue chain is Bifunctional protein PyrR (178 aa).

The PRPP-binding signature appears at 99 to 111; the sequence is VILVDDVLFTGRT.

It belongs to the purine/pyrimidine phosphoribosyltransferase family. PyrR subfamily. As to quaternary structure, homodimer and homohexamer; in equilibrium.

It catalyses the reaction UMP + diphosphate = 5-phospho-alpha-D-ribose 1-diphosphate + uracil. Regulates transcriptional attenuation of the pyrimidine nucleotide (pyr) operon by binding in a uridine-dependent manner to specific sites on pyr mRNA. This disrupts an antiterminator hairpin in the RNA and favors formation of a downstream transcription terminator, leading to a reduced expression of downstream genes. Its function is as follows. Also displays a weak uracil phosphoribosyltransferase activity which is not physiologically significant. In Limosilactobacillus reuteri subsp. reuteri (strain JCM 1112) (Lactobacillus reuteri), this protein is Bifunctional protein PyrR.